The chain runs to 514 residues: GMP synthase [glutamine-hydrolyzing] (514 aa).

Positions 7–197 (KVLILDFGSQ…LFNICKCERN (191 aa)) constitute a Glutamine amidotransferase type-1 domain. The active-site Nucleophile is C84. Active-site residues include H171 and E173. One can recognise a GMPS ATP-PPase domain in the interval 198-389 (WNMGSFIEYE…LKLPEDIVYR (192 aa)). 225–231 (SGGVDSS) is a binding site for ATP.

Homodimer.

It carries out the reaction XMP + L-glutamine + ATP + H2O = GMP + L-glutamate + AMP + diphosphate + 2 H(+). It participates in purine metabolism; GMP biosynthesis; GMP from XMP (L-Gln route): step 1/1. Functionally, catalyzes the synthesis of GMP from XMP. The chain is GMP synthase [glutamine-hydrolyzing] from Brachyspira hyodysenteriae (strain ATCC 49526 / WA1).